The sequence spans 242 residues: Anamorsin homolog (242 aa).

The interval 1 to 140 (MMNFADTLVI…NVTAENPDFL (140 aa)) is N-terminal SAM-like domain. The tract at residues 141-162 (SNEDDDEGNSSDGEAYQNAEDN) is linker. Residues cysteine 205, cysteine 208, cysteine 216, and cysteine 219 each contribute to the [4Fe-4S] cluster site. 2 short sequence motifs (cx2C motif) span residues 205-208 (CGNC) and 216-219 (CASC). The tract at residues 205–219 (CGNCYLGDAFRCASC) is fe-S binding site B.

Belongs to the anamorsin family. In terms of assembly, monomer. Requires [4Fe-4S] cluster as cofactor.

It is found in the cytoplasm. Its subcellular location is the mitochondrion intermembrane space. Component of the cytosolic iron-sulfur (Fe-S) protein assembly (CIA) machinery. Required for the maturation of extramitochondrial Fe-S proteins. Part of an electron transfer chain functioning in an early step of cytosolic Fe-S biogenesis, facilitating the de novo assembly of a [4Fe-4S] cluster on the cytosolic Fe-S scaffold complex. Electrons are transferred from NADPH via a FAD- and FMN-containing diflavin oxidoreductase. Together with the diflavin oxidoreductase, also required for the assembly of the diferric tyrosyl radical cofactor of ribonucleotide reductase (RNR), probably by providing electrons for reduction during radical cofactor maturation in the catalytic small subunit. The protein is Anamorsin homolog of Plasmodium knowlesi (strain H).